We begin with the raw amino-acid sequence, 386 residues long: Lipoyl synthase, mitochondrial (386 aa).

[4Fe-4S] cluster contacts are provided by Cys115, Cys120, Cys126, Cys146, Cys150, Cys153, and Ser362. Residues 131–351 (ETGTATATIM…QKLGMEMGFR (221 aa)) form the Radical SAM core domain.

Belongs to the radical SAM superfamily. Lipoyl synthase family. The cofactor is [4Fe-4S] cluster.

The protein localises to the mitochondrion. The enzyme catalyses [[Fe-S] cluster scaffold protein carrying a second [4Fe-4S](2+) cluster] + N(6)-octanoyl-L-lysyl-[protein] + 2 oxidized [2Fe-2S]-[ferredoxin] + 2 S-adenosyl-L-methionine + 4 H(+) = [[Fe-S] cluster scaffold protein] + N(6)-[(R)-dihydrolipoyl]-L-lysyl-[protein] + 4 Fe(3+) + 2 hydrogen sulfide + 2 5'-deoxyadenosine + 2 L-methionine + 2 reduced [2Fe-2S]-[ferredoxin]. It participates in protein modification; protein lipoylation via endogenous pathway; protein N(6)-(lipoyl)lysine from octanoyl-[acyl-carrier-protein]: step 2/2. Catalyzes the radical-mediated insertion of two sulfur atoms into the C-6 and C-8 positions of the octanoyl moiety bound to the lipoyl domains of lipoate-dependent enzymes, thereby converting the octanoylated domains into lipoylated derivatives. The polypeptide is Lipoyl synthase, mitochondrial (Picea sitchensis (Sitka spruce)).